The chain runs to 237 residues: Ribose-5-phosphate isomerase A (237 aa).

Residues 33-36, 90-93, and 103-106 each bind substrate; these read TGST, DGAD, and KGGG. Glu112 functions as the Proton acceptor in the catalytic mechanism. Lys130 contributes to the substrate binding site.

The protein belongs to the ribose 5-phosphate isomerase family. As to quaternary structure, homodimer.

The catalysed reaction is aldehydo-D-ribose 5-phosphate = D-ribulose 5-phosphate. Its pathway is carbohydrate degradation; pentose phosphate pathway; D-ribose 5-phosphate from D-ribulose 5-phosphate (non-oxidative stage): step 1/1. In terms of biological role, catalyzes the reversible conversion of ribose-5-phosphate to ribulose 5-phosphate. The sequence is that of Ribose-5-phosphate isomerase A from Trichodesmium erythraeum (strain IMS101).